Consider the following 91-residue polypeptide: MNKSELIQAIADEAELSKRAAAEFVNAFVSVVTQELKDGNDVTLVGFGTFHAAQSAERQGRNPKTGEPLTIAARKTPKFRSGKALKDAVNG.

This sequence belongs to the bacterial histone-like protein family.

Functionally, histone-like DNA-binding protein which is capable of wrapping DNA to stabilize it, and thus to prevent its denaturation under extreme environmental conditions. This chain is DNA-binding protein HU-beta 2 (hupB2), found in Neisseria meningitidis serogroup A / serotype 4A (strain DSM 15465 / Z2491).